The following is a 432-amino-acid chain: MSTQMSVFLSQDSAAPHWGEKALLSFSETGATIHLGEGHDLGAIQRAARQLDGQGIHSVLLSGEHWDLESIWAFHQGYRNPKKHGLLEWTALSEEDQTELQARIKATDFTRDIINKTAEEVAPRQLATMAAEFIKSVAPEGTVTARIVKDKDLLAEGWEGIYAVGRGSDRTSAMLQLDYNPTGDENAPVFACLVGKGITFDSGGYSLKPSNFMSAMKADMGGSGTITGGLGLAILRGLNKRVKLILCCAENMVSGRALKLGDIITYKNGKTVEIMNTDAEGRLVLADGLIYASEHNPELIIDCATLTGAAKNALGNDYHALMSFDDELSHQALTAANKEKEGLWPLPLADFHRGMLPSNFADLSNISSGDYSPGASTAAAFLSYFVEDYKKGWLHFDCAGTYRKSASDKWAAGATGMGVRTLARLLNEQAEK.

Mn(2+)-binding residues include K196 and D201. K208 is an active-site residue. Mn(2+) is bound by residues D219, D278, and E280. The active site involves R282.

This sequence belongs to the peptidase M17 family. Homohexamer. It depends on Mn(2+) as a cofactor.

The protein localises to the cytoplasm. It catalyses the reaction Release of an N-terminal amino acid, Xaa, from a peptide or arylamide. Xaa is preferably Glu or Asp but may be other amino acids, including Leu, Met, His, Cys and Gln.. In terms of biological role, probably plays an important role in intracellular peptide degradation. The chain is Peptidase B from Vibrio parahaemolyticus serotype O3:K6 (strain RIMD 2210633).